The chain runs to 197 residues: Protein RmlC homolog (197 aa).

Residue H76 is the Proton acceptor of the active site. Y140 acts as the Proton donor in catalysis.

Could catalyze a 3,5-epimerization. This chain is Protein RmlC homolog (rfbC), found in Streptococcus pyogenes serotype M6 (strain ATCC BAA-946 / MGAS10394).